Consider the following 473-residue polypeptide: Reticulon-4 receptor (473 aa).

Residues Met1–Pro26 form the signal peptide. 2 disulfides stabilise this stretch: Cys27/Cys33 and Cys31/Cys43. The LRRNT domain occupies Cys27–Ala57. LRR repeat units follow at residues Pro56–Ser79, Cys80–Gly103, Thr105–Gly128, Leu129–Gly152, Leu153–Asp176, Gly178–Gly200, His202–Asp224, Leu225–Pro248, and Arg250–Ala273. Asn82 carries an N-linked (GlcNAc...) asparagine glycan. The LRRCT domain maps to Asn260–Ala310. 3 disulfides stabilise this stretch: Cys264-Cys287, Cys266-Cys335, and Cys309-Cys336. The disordered stretch occupies residues Val346–Gly446. Residue Asn372 is glycosylated (N-linked (GlcNAc...) asparagine). The span at Pro413–Cys429 shows a compositional bias: basic residues. Positions Ala434–Glu445 are enriched in gly residues. Residue Ser447 is the site of GPI-anchor amidated serine attachment. Residues Gly448 to Cys473 constitute a propeptide, removed in mature form.

This sequence belongs to the Nogo receptor family. As to quaternary structure, homodimer. Interacts with MAG. Interacts with RTN4 and OMG. Interacts with LINGO1 and NGFR. Interacts with KIAA0319L. Interacts with OLFM1; this inhibits interaction with LINGO1 and NGFR. N-glycosylated. O-glycosylated. Contains terminal sialic acid groups on its glycan chains. In terms of tissue distribution, detected in embryonic cerebellum, in spinal cord motor neurons and in dorsal root ganglia. Detected in adult brain, in neocortex, hippocampus, striatum, thalamus and dorsal root ganglion neurons (at protein level).

Its subcellular location is the cell membrane. It is found in the membrane raft. It localises to the cell projection. The protein localises to the dendrite. The protein resides in the perikaryon. Its subcellular location is the axon. Receptor for RTN4, OMG and MAG. Functions as a receptor for the sialylated gangliosides GT1b and GM1. Besides, functions as a receptor for chondroitin sulfate proteoglycans. Can also bind heparin. Intracellular signaling cascades are triggered via the coreceptor NGFR. Signaling mediates activation of Rho and downstream reorganization of the actin cytoskeleton. Mediates axonal growth inhibition. May play a role in regulating axon regeneration and neuronal plasticity in the adult central nervous system. Plays a role in postnatal brain development. Required for normal axon migration across the brain midline and normal formation of the corpus callosum. Protects motoneurons against apoptosis; protection against apoptosis is probably mediated via interaction with MAG. Acts in conjunction with RTN4 and LINGO1 in regulating neuronal precursor cell motility during cortical development. Like other family members, plays a role in restricting the number dendritic spines and the number of synapses that are formed during brain development. The polypeptide is Reticulon-4 receptor (Rtn4r) (Rattus norvegicus (Rat)).